A 376-amino-acid chain; its full sequence is Erythronate-4-phosphate dehydrogenase (376 aa).

The substrate site is built by Ser-45 and Thr-67. NAD(+) contacts are provided by residues 127–128, Asp-147, and Thr-176; that span reads QV. The active site involves Arg-209. Residue Asp-233 participates in NAD(+) binding. The active site involves Glu-238. The active-site Proton donor is the His-255. Gly-258 provides a ligand contact to NAD(+). Tyr-259 lines the substrate pocket.

The protein belongs to the D-isomer specific 2-hydroxyacid dehydrogenase family. PdxB subfamily. As to quaternary structure, homodimer.

The protein localises to the cytoplasm. The enzyme catalyses 4-phospho-D-erythronate + NAD(+) = (R)-3-hydroxy-2-oxo-4-phosphooxybutanoate + NADH + H(+). Its pathway is cofactor biosynthesis; pyridoxine 5'-phosphate biosynthesis; pyridoxine 5'-phosphate from D-erythrose 4-phosphate: step 2/5. Catalyzes the oxidation of erythronate-4-phosphate to 3-hydroxy-2-oxo-4-phosphonooxybutanoate. The protein is Erythronate-4-phosphate dehydrogenase of Aliivibrio fischeri (strain ATCC 700601 / ES114) (Vibrio fischeri).